The sequence spans 215 residues: Holliday junction branch migration complex subunit RuvA (215 aa).

Positions 1–67 (MIGWLQGERI…DDGSTLFGFC (67 aa)) are domain I. The segment at 68 to 146 (DQQERDLFRT…NWAPLQEPSL (79 aa)) is domain II. The segment at 147-158 (SLVDRSDVKAIP) is flexible linker. The interval 159–215 (LGEPCLRDLQITLETLGYEDLEIRRAMRAVASGPDVPAEDDGDAWLRASLKWLSQSA) is domain III.

Belongs to the RuvA family. Homotetramer. Forms an RuvA(8)-RuvB(12)-Holliday junction (HJ) complex. HJ DNA is sandwiched between 2 RuvA tetramers; dsDNA enters through RuvA and exits via RuvB. An RuvB hexamer assembles on each DNA strand where it exits the tetramer. Each RuvB hexamer is contacted by two RuvA subunits (via domain III) on 2 adjacent RuvB subunits; this complex drives branch migration. In the full resolvosome a probable DNA-RuvA(4)-RuvB(12)-RuvC(2) complex forms which resolves the HJ.

The protein localises to the cytoplasm. Its function is as follows. The RuvA-RuvB-RuvC complex processes Holliday junction (HJ) DNA during genetic recombination and DNA repair, while the RuvA-RuvB complex plays an important role in the rescue of blocked DNA replication forks via replication fork reversal (RFR). RuvA specifically binds to HJ cruciform DNA, conferring on it an open structure. The RuvB hexamer acts as an ATP-dependent pump, pulling dsDNA into and through the RuvAB complex. HJ branch migration allows RuvC to scan DNA until it finds its consensus sequence, where it cleaves and resolves the cruciform DNA. This is Holliday junction branch migration complex subunit RuvA from Synechococcus sp. (strain WH7803).